Consider the following 128-residue polypeptide: Large ribosomal subunit protein eL8 (128 aa).

This sequence belongs to the eukaryotic ribosomal protein eL8 family. In terms of assembly, part of the 50S ribosomal subunit. Probably part of the RNase P complex.

It is found in the cytoplasm. Multifunctional RNA-binding protein that recognizes the K-turn motif in ribosomal RNA, the RNA component of RNase P, box H/ACA, box C/D and box C'/D' sRNAs. The chain is Large ribosomal subunit protein eL8 from Staphylothermus marinus (strain ATCC 43588 / DSM 3639 / JCM 9404 / F1).